Here is a 108-residue protein sequence, read N- to C-terminus: Glutaredoxin 4 (108 aa).

The 103-residue stretch at 4–106 (FQKIKKQIQD…KLILKVKKKY (103 aa)) folds into the Glutaredoxin domain. A glutathione-binding site is contributed by K21. [2Fe-2S] cluster is bound at residue C29. Glutathione contacts are provided by residues R58, F70, and 83–84 (CS).

Belongs to the glutaredoxin family. Monothiol subfamily. Homodimer.

The protein resides in the cytoplasm. Functionally, monothiol glutaredoxin involved in the biogenesis of iron-sulfur clusters. This is Glutaredoxin 4 (grxD) from Buchnera aphidicola subsp. Acyrthosiphon pisum (strain APS) (Acyrthosiphon pisum symbiotic bacterium).